We begin with the raw amino-acid sequence, 220 residues long: Probable GTP-binding protein EngB (220 aa).

The 175-residue stretch at E26–P200 folds into the EngB-type G domain. GTP contacts are provided by residues G34 to S41, G61 to L65, D79 to G82, T146 to D149, and F179 to S181. 2 residues coordinate Mg(2+): S41 and T63.

The protein belongs to the TRAFAC class TrmE-Era-EngA-EngB-Septin-like GTPase superfamily. EngB GTPase family. Requires Mg(2+) as cofactor.

Its function is as follows. Necessary for normal cell division and for the maintenance of normal septation. This is Probable GTP-binding protein EngB from Vibrio cholerae serotype O1 (strain ATCC 39541 / Classical Ogawa 395 / O395).